The following is a 942-amino-acid chain: DNA mismatch repair protein MSH2 (942 aa).

Residue 667–674 coordinates ATP; it reads GPNMGGKS.

The protein belongs to the DNA mismatch repair MutS family. In terms of assembly, heterodimer of MSH2 and MSH6 (GTBP).

The protein resides in the nucleus. Functionally, involved in postreplication mismatch repair. Binds specifically to DNA containing mismatched nucleotides thus providing a target for the excision repair processes characteristic of postreplication mismatch repair. The sequence is that of DNA mismatch repair protein MSH2 (MUS1) from Zea mays (Maize).